The primary structure comprises 141 residues: Nucleoside diphosphate kinase (141 aa).

Positions 11, 59, 87, 93, 104, and 114 each coordinate ATP. The Pros-phosphohistidine intermediate role is filled by histidine 117.

It belongs to the NDK family. As to quaternary structure, homotetramer. Mg(2+) is required as a cofactor.

The protein localises to the cytoplasm. It carries out the reaction a 2'-deoxyribonucleoside 5'-diphosphate + ATP = a 2'-deoxyribonucleoside 5'-triphosphate + ADP. The enzyme catalyses a ribonucleoside 5'-diphosphate + ATP = a ribonucleoside 5'-triphosphate + ADP. Functionally, major role in the synthesis of nucleoside triphosphates other than ATP. The ATP gamma phosphate is transferred to the NDP beta phosphate via a ping-pong mechanism, using a phosphorylated active-site intermediate. The chain is Nucleoside diphosphate kinase from Burkholderia cenocepacia (strain HI2424).